Reading from the N-terminus, the 613-residue chain is MDKRMITDAFEEIKWNGWGDTGVCIKYDEARQLPIHTNGKPMKHLLKFMKDDVLKVKGEFKIKPTPGLTKEEAIKRLPPPVVKQPFVDELRQVLSKDQIRLDAYARLTHIFGKNYRDLWRVRRGMIDRPPDAVILPNNHDDCVKIMELAQKHNVVVVPFGGGTNVTGGVEPNPFETRRMVISIDMRRMGRMLHIDTESGTAVFEVGVLGPDIDEQLSRYGFMMGHDPDSYAYSTLGGWIAARGSGAMSNKYGDIENMILAMRVVTPVGVVETPLTSRPCGVDLNAMFVGSEGAFGLVTEAVVKIERLPEVKRYEGWLFPSFEVAFTAFHTCTRKGIHPCTMRLYDEDDTRLSFAASTDSGLVSTFFSKCFKKYIATVKGWNLSKISLVVVGFEGTKAQTNCQRSELVGVFQAFGATCLGTKPGNTWQEKKYDLPYLRDFALAHNFWADVFETSVLYTDAIHCWRAVKKSFAEVMAENGKNAWIGCHTAHQYRFGCCLYFTFIGGQADENDLKIFLQVKKRAMEVMLQHRGNLTHHHGIGYEHVPWMKRYNGEGGLDAIMKFKKALDPKNICNPGKLLPSPPSEKETPKATQARQNREMMFDKMGIPGALQAHL.

One can recognise an FAD-binding PCMH-type domain in the interval 126 to 307; it reads IDRPPDAVIL…TEAVVKIERL (182 aa). Residues 158–164, 228–234, 241–244, and 291–297 contribute to the FAD site; these read PFGGGTN, DSYAYST, ARGS, and EGAFGLV. R437 lines the substrate pocket. Y498 functions as the Proton donor/acceptor in the catalytic mechanism. An important for enzyme activity region spans residues 534–536; that stretch reads HHH. The tract at residues 572–593 is disordered; it reads NPGKLLPSPPSEKETPKATQAR. The short motif at 611-613 is the Microbody targeting signal element; the sequence is AHL.

The protein belongs to the FAD-binding oxidoreductase/transferase type 4 family. As to quaternary structure, homodimer. FAD is required as a cofactor.

It is found in the peroxisome. It carries out the reaction a long chain fatty alcohol + a 1-acylglycerone 3-phosphate = a 1-O-alkylglycerone 3-phosphate + a long-chain fatty acid + H(+). It participates in glycerolipid metabolism; ether lipid biosynthesis. Catalyzes the exchange of an acyl for a long-chain alkyl group and the formation of the ether bond in the biosynthesis of ether phospholipids. This Trypanosoma brucei brucei protein is Alkyldihydroxyacetonephosphate synthase.